The primary structure comprises 184 residues: Ribosome-recycling factor (184 aa).

This sequence belongs to the RRF family.

It is found in the cytoplasm. Its function is as follows. Responsible for the release of ribosomes from messenger RNA at the termination of protein biosynthesis. May increase the efficiency of translation by recycling ribosomes from one round of translation to another. This chain is Ribosome-recycling factor, found in Hyphomonas neptunium (strain ATCC 15444).